Here is a 694-residue protein sequence, read N- to C-terminus: Elongation factor G (694 aa).

The tr-type G domain occupies 10-285 (EKTRNIGIMA…GVVDYLPSPL (276 aa)). Residues 19 to 26 (AHIDAGKT), 83 to 87 (DTPGH), and 137 to 140 (NKMD) contribute to the GTP site.

It belongs to the TRAFAC class translation factor GTPase superfamily. Classic translation factor GTPase family. EF-G/EF-2 subfamily.

The protein resides in the cytoplasm. Catalyzes the GTP-dependent ribosomal translocation step during translation elongation. During this step, the ribosome changes from the pre-translocational (PRE) to the post-translocational (POST) state as the newly formed A-site-bound peptidyl-tRNA and P-site-bound deacylated tRNA move to the P and E sites, respectively. Catalyzes the coordinated movement of the two tRNA molecules, the mRNA and conformational changes in the ribosome. This chain is Elongation factor G, found in Lactobacillus delbrueckii subsp. bulgaricus (strain ATCC 11842 / DSM 20081 / BCRC 10696 / JCM 1002 / NBRC 13953 / NCIMB 11778 / NCTC 12712 / WDCM 00102 / Lb 14).